The primary structure comprises 267 residues: Cilia- and flagella-associated protein 300 (267 aa).

The protein belongs to the CFAP300 family. In terms of assembly, interacts with DNAAF2. As to expression, expressed in nasal epithelial cells.

The protein localises to the cytoplasm. Its subcellular location is the cytoskeleton. It localises to the cilium axoneme. Functionally, cilium- and flagellum-specific protein that plays a role in axonemal structure organization and motility. May play a role in outer and inner dynein arm assembly. The chain is Cilia- and flagella-associated protein 300 from Homo sapiens (Human).